Reading from the N-terminus, the 712-residue chain is Interleukin-1 receptor-associated kinase 1 (712 aa).

The region spanning 27–106 is the Death domain; that stretch reads MCRFYKVMDA…DIITAWHPPA (80 aa). Residue threonine 66 is modified to Phosphothreonine; by PKC/PRKCI. The segment at 105–187 is disordered; the sequence is PAPLPSPGTT…STKPGPESSV (83 aa). The interval 110-211 is proST region; sequence SPGTTAPRPS…LCEISRGTHN (102 aa). Residues 115-133 are compositionally biased toward low complexity; it reads APRPSSIPAPAEAEAWSPR. Serine 131 bears the Phosphoserine mark. A Glycyl lysine isopeptide (Lys-Gly) (interchain with G-Cter in ubiquitin) cross-link involves residue lysine 134. Residues 137-154 show a composition bias toward polar residues; the sequence is SSASTFLSPAFPGSQTHS. Residue lysine 180 forms a Glycyl lysine isopeptide (Lys-Gly) (interchain with G-Cter in ubiquitin) linkage. A Phosphothreonine; by IRAK4 modification is found at threonine 209. One can recognise a Protein kinase domain in the interval 212-521; it reads FSEELKIGEG…TQVYERLEKL (310 aa). ATP contacts are provided by residues 218 to 226 and lysine 239; that span reads IGEGGFGCV. Residue aspartate 340 is the Proton acceptor of the active site. ATP contacts are provided by residues 342-345 and aspartate 358; that span reads KSSN. 2 positions are modified to phosphoserine: serine 371 and serine 375. Threonine 387 carries the phosphothreonine modification. Disordered regions lie at residues 532–591, 613–660, and 690–712; these read SEAA…SDES, APLR…PPQI, and SSLP…EFQS. A compositionally biased stretch (polar residues) spans 543–553; the sequence is QENSYVSSTGR. Serine 556 carries the phosphoserine modification. Low complexity-rich tracts occupy residues 562–575 and 643–658; these read QPLA…AQAA and EGLA…SEPP.

The protein belongs to the protein kinase superfamily. TKL Ser/Thr protein kinase family. Pelle subfamily. In terms of assembly, homodimer. Forms a complex with TRAF6, PELI1, IRAK4 and MYD88. Direct binding of SMAD6 to PELI1 prevents complex formation and hence negatively regulates IL1R-TLR signaling and eventually NF-kappa-B-mediated gene expression. The TRAF6-PELI1-IRAK4-MYD88 complex recruits MAP3K7/TAK1, TAB1 and TAB2 to mediate NF-kappa-B activation. Interaction with MYD88 recruits IRAK1 to the stimulated receptor complex. Interacts with TOLLIP; this interaction occurs in the cytosol prior to receptor activation. Interacts with IL1RL1. Interacts with PELI1 and TRAF6. Interacts (when polyubiquitinated) with IKBKG/NEMO. Interacts with RSAD2/viperin. Interacts with IRAK1BP1. Interacts with PELI2. Interacts with ZC3H12A; this interaction increases the interaction between ZC3H12A and IKBKB/IKKB. Interacts with IRAK4. Interacts with PELI3. Interacts with INAVA; the interaction takes place upon PRR stimulation. Interacts (via C-terminus) with NFATC4 (via N-terminus). As to quaternary structure, (Microbial infection) Interacts with mumps virus protein SH; this interaction inhibits downstream NF-kappa-B pathway activation. (Microbial infection) Interacts with alphaviruses SINV, CHIKV, RRV, VEEV and EEEV capsid proteins; the interactions lead to inhibition of IRAK1-dependent signaling. Mg(2+) is required as a cofactor. Following recruitment on the activated receptor complex, phosphorylated on Thr-209, probably by IRAK4, resulting in a conformational change of the kinase domain, allowing further phosphorylations to take place. Thr-387 phosphorylation in the activation loop is required to achieve full enzymatic activity. In terms of processing, polyubiquitinated by TRAF6 after cell stimulation with IL-1-beta by PELI1, PELI2 and PELI3. Polyubiquitination occurs with polyubiquitin chains linked through 'Lys-63'. Ubiquitination promotes interaction with NEMO/IKBKG. Also sumoylated; leading to nuclear translocation. In terms of tissue distribution, isoform 1 and isoform 2 are ubiquitously expressed in all tissues examined, with isoform 1 being more strongly expressed than isoform 2.

It is found in the cytoplasm. The protein resides in the nucleus. It localises to the lipid droplet. The enzyme catalyses L-seryl-[protein] + ATP = O-phospho-L-seryl-[protein] + ADP + H(+). It catalyses the reaction L-threonyl-[protein] + ATP = O-phospho-L-threonyl-[protein] + ADP + H(+). Its function is as follows. Serine/threonine-protein kinase that plays a critical role in initiating innate immune response against foreign pathogens. Involved in Toll-like receptor (TLR) and IL-1R signaling pathways. Is rapidly recruited by MYD88 to the receptor-signaling complex upon TLR activation. Association with MYD88 leads to IRAK1 phosphorylation by IRAK4 and subsequent autophosphorylation and kinase activation. Phosphorylates E3 ubiquitin ligases Pellino proteins (PELI1, PELI2 and PELI3) to promote pellino-mediated polyubiquitination of IRAK1. Then, the ubiquitin-binding domain of IKBKG/NEMO binds to polyubiquitinated IRAK1 bringing together the IRAK1-MAP3K7/TAK1-TRAF6 complex and the NEMO-IKKA-IKKB complex. In turn, MAP3K7/TAK1 activates IKKs (CHUK/IKKA and IKBKB/IKKB) leading to NF-kappa-B nuclear translocation and activation. Alternatively, phosphorylates TIRAP to promote its ubiquitination and subsequent degradation. Phosphorylates the interferon regulatory factor 7 (IRF7) to induce its activation and translocation to the nucleus, resulting in transcriptional activation of type I IFN genes, which drive the cell in an antiviral state. When sumoylated, translocates to the nucleus and phosphorylates STAT3. This is Interleukin-1 receptor-associated kinase 1 from Homo sapiens (Human).